A 304-amino-acid chain; its full sequence is Thiosulfate sulfurtransferase TUM1 (304 aa).

2 Rhodanese domains span residues 20 to 137 (KVHR…PLDS) and 177 to 299 (LAKK…PEWI). The segment covering 191–201 (RFEGTEPEPRS) has biased composition (basic and acidic residues). Residues 191–222 (RFEGTEPEPRSDIPSGHIPGTQPLPYGSLLDP) form a disordered region. Ser-201 carries the post-translational modification Phosphoserine. The active-site Cysteine persulfide intermediate is the Cys-259. The residue at position 264 (Ser-264) is a Phosphoserine.

It localises to the mitochondrion. It is found in the cytoplasm. The catalysed reaction is thiosulfate + hydrogen cyanide = thiocyanate + sulfite + 2 H(+). Its function is as follows. Sulfur transferase that accepts persulfite from NFS1 and transfers it to UBA4 in the pathway for 2-thiolation of the wobble uridine base of tRNAs. Stimulates sulfur transfer by NFS1. Involved in metabolism of sterol esters in a tRNA thiolation pathway-independent manner. The chain is Thiosulfate sulfurtransferase TUM1 from Saccharomyces cerevisiae (strain ATCC 204508 / S288c) (Baker's yeast).